The following is a 741-amino-acid chain: 1,4-alpha-glucan branching enzyme GlgB (741 aa).

Asp420 functions as the Nucleophile in the catalytic mechanism. Residue Glu473 is the Proton donor of the active site.

Belongs to the glycosyl hydrolase 13 family. GlgB subfamily. Monomer.

It carries out the reaction Transfers a segment of a (1-&gt;4)-alpha-D-glucan chain to a primary hydroxy group in a similar glucan chain.. Its pathway is glycan biosynthesis; glycogen biosynthesis. Functionally, catalyzes the formation of the alpha-1,6-glucosidic linkages in glycogen by scission of a 1,4-alpha-linked oligosaccharide from growing alpha-1,4-glucan chains and the subsequent attachment of the oligosaccharide to the alpha-1,6 position. This Pseudomonas syringae pv. tomato (strain ATCC BAA-871 / DC3000) protein is 1,4-alpha-glucan branching enzyme GlgB.